The primary structure comprises 152 residues: Clitocypin-2 (152 aa).

The protein belongs to the protease inhibitor I48 family. Homodimer. In terms of tissue distribution, expressed in all analyzed tissues, but expression was higher in the pileus and in the lower part of the stipe.

Functionally, binds and inhibits cysteine proteinases. Inhibits most strongly papain and cathepsin L, more weakly bromelain and cathepsin B while it is completely ineffective against cathepsin H. The polypeptide is Clitocypin-2 (clt2) (Clitocybe nebularis (Clouded agaric)).